A 566-amino-acid polypeptide reads, in one-letter code: Beta-1,4 N-acetylgalactosaminyltransferase 2 (566 aa).

The interval Met1–Cys22 is ER exit and post-Golgi subcellular localization. Over Met1–Arg67 the chain is Cytoplasmic. The Vesicular targeting motif lies at Gly9 to Val15. A helical; Signal-anchor for type II membrane protein transmembrane segment spans residues Phe68 to Phe88. The Lumenal portion of the chain corresponds to Gly89–Ala566.

The protein belongs to the glycosyltransferase 2 family. Homodimer; disulfide-linked. As to expression, widely expressed. Highly expressed in colon and to a lesser extent in kidney, stomach, ileum and rectum.

It localises to the golgi apparatus. Its subcellular location is the trans-Golgi network membrane. It is found in the cytoplasmic vesicle membrane. The catalysed reaction is an N-acetyl-alpha-neuraminyl-(2-&gt;3)-beta-D-galactosyl derivative + UDP-N-acetyl-alpha-D-galactosamine = an N-acetyl-beta-D-galactosaminyl-(1-&gt;4)-[N-acetyl-alpha-neuraminyl-(2-&gt;3)]-beta-D-galactosyl derivative + UDP + H(+). It carries out the reaction a 3-O-{alpha-Neu5Ac-(2-&gt;3)-beta-D-Gal-(1-&gt;3)-[alpha-Neu5Ac-(2-&gt;6)]-alpha-D-GalNAc}-L-seryl-[protein] + UDP-N-acetyl-alpha-D-galactosamine = a 3-O-{[alpha-Neu5Ac-(2-&gt;3)]-beta-D-GalNAc-(1-&gt;4)-beta-D-Gal-(1-&gt;3)-[alpha-Neu5Ac-(2-&gt;6)]-alpha-D-GalNAc}-L-seryl-[protein] + UDP + H(+). It catalyses the reaction a 3-O-{alpha-Neu5Ac-(2-&gt;3)-beta-D-Gal-(1-&gt;3)-[alpha-Neu5Ac-(2-&gt;6)]-alpha-D-GalNAc}-L-threonyl-[protein] + UDP-N-acetyl-alpha-D-galactosamine = a 3-O-{[alpha-Neu5Ac-(2-&gt;3)]-beta-D-GalNAc-(1-&gt;4)-beta-D-Gal-(1-&gt;3)-[alpha-Neu5Ac-(2-&gt;6)]-alpha-D-GalNAc}-L-threonyl-[protein] + UDP + H(+). The enzyme catalyses a neolactoside IV(3)-alpha-NeuAc-nLc4Cer + UDP-N-acetyl-alpha-D-galactosamine = a neolactoside IV(4)-GalNAc,IV(3)-alpha-NeuAc-nLc4Cer + UDP + H(+). Its pathway is protein modification; protein glycosylation. It participates in glycolipid biosynthesis. Beta-1,4 N-acetylgalactosaminyltransferase involved in the biosynthesis of Sd(a) histo-blood group antigen. Catalyzes the transfer of N-acetylgalactosamine (GalNAc) group in a beta-1,4-linkage from UDP-GalNAc to the galactose residue of NeuAcalpha2-&gt;3Gal-R to form Sd(a) glycan epitope GalNAcbeta1-&gt;4(NeuAcalpha2-&gt;3)Gal-R. The Sd(a) epitope is carried in O- and N-linked glycoproteins and glycolipids, including O-linked core 1 structures on GYPA/glycophorin, SLC4A1 and SLC29A1 in erythrocytes, N-linked glycans attached to the Tamm-Horsfall glycoprotein UMOD/uromodulin in renal fluids, O-linked core 3 glycans on mucins in colon and neolactosides in gastric mucosa. Confers protection against influenza A virus strains that attach to NeuAcalpha2-&gt;3-carrying host receptors. Modifies N-glycan chains on host receptors and prevents virus entry into cells. This is Beta-1,4 N-acetylgalactosaminyltransferase 2 from Homo sapiens (Human).